The sequence spans 548 residues: MENNKQDDHQEEFIFRSKLPDIYIPNHLPLHSYCFENISQFKDRPCLINGATGEIITYADVDLTSRKVAAGLDKLGIKQGDVIMLLLQNSPEFVYAFLAASYIGAIITTANPFYTPAEVAKQAAASKTKLVITLAGYIDKVKEFTGGESGVKVMCVDAPPPESECLHFSELTQADETEIPAVKIHPDDVVALPYSSGTTGLPKGVMLTHKGLVTSVAQQVDGDNPNLYFHQNDVILCVLPLFHIYSLNSILLCGLRVGAAILIMQKFEISKLLELIEKFKVTIAPFVPPIVLSVAKCPDLHRYDLSSIRTVMSGGAPMGKELEDAVKEKLPHAKLGQGYGMTEAGPVLSMCLAFAKEPFPIKSGACGTVVRNAEMKIVDPDTGASLPRNQSGEICIRGKQIMKGYINDAEATKGTIDEGGWLHTGDIGFIDNDDELFIVDRLKELIKYKGFQVAPAELESMLISHPNITDAAVVPMKDEAAGEVPVAFVVRSNGSKITEEDIKQYISKQVVFYKRINKAFFIEEIPKNPSGKILRKILRAKLVTEQAI.

Residues 195–203, 337–342, Asp-426, 438–441, and Lys-532 contribute to the ATP site; these read SSGTTGLPK, QGYGMT, and IVDR. Residues 268–337 are SBD1; that stretch reads EISKLLELIE…EKLPHAKLGQ (70 aa). An SBD2 region spans residues 338-405; that stretch reads GYGMTEAGPV…IRGKQIMKGY (68 aa).

It belongs to the ATP-dependent AMP-binding enzyme family. Mostly expressed in glandular trichomes (lupulin glands) after flowering, and, to a lower extent, in stems, leaves, cones and flowers.

It is found in the cytoplasm. The enzyme catalyses (E)-4-coumarate + ATP + CoA = (E)-4-coumaroyl-CoA + AMP + diphosphate. It participates in secondary metabolite biosynthesis. Involved in the biosynthesis of prenylated phenolics natural products which contribute to the bitter taste of beer and display broad biological activities. Catalyzes the ligation of CoA on (E)-4-coumarate to produce (E)-4-coumaroyl-CoA. The protein is 4-coumarate--CoA ligase CCL1 of Humulus lupulus (European hop).